Consider the following 209-residue polypeptide: Large ribosomal subunit protein uL3 (209 aa).

Positions 128-152 (QARGPMSHGSRYHRRPGSMGPVDPN) are disordered.

This sequence belongs to the universal ribosomal protein uL3 family. Part of the 50S ribosomal subunit. Forms a cluster with proteins L14 and L19.

One of the primary rRNA binding proteins, it binds directly near the 3'-end of the 23S rRNA, where it nucleates assembly of the 50S subunit. This is Large ribosomal subunit protein uL3 from Halalkalibacterium halodurans (strain ATCC BAA-125 / DSM 18197 / FERM 7344 / JCM 9153 / C-125) (Bacillus halodurans).